A 104-amino-acid chain; its full sequence is Type VII secretion system extracellular protein B (104 aa).

This sequence belongs to the WXG100 family. As to quaternary structure, homodimer. When mixed with EsxA does not form heterodimers. Forms heterodimers with EsxD.

The protein resides in the secreted. Virulence factor that is important for the establishment of infection in the host. EsxB is required for EsxA synthesis as well as secretion. Mediates together with EsxA the release of S.aureus from the host cell. Also inhibits host cytokine production and thus modulates dendritic cell-mediated immunity. This is Type VII secretion system extracellular protein B from Staphylococcus aureus (strain USA300).